The primary structure comprises 201 residues: Proteasome subunit beta 1 (201 aa).

Met-1 is a propeptide (removed in mature form; by autocatalysis). Thr-2 functions as the Nucleophile in the catalytic mechanism.

The protein belongs to the peptidase T1B family. The 20S proteasome core is composed of 14 alpha and 14 beta subunits that assemble into four stacked heptameric rings, resulting in a barrel-shaped structure. The two inner rings, each composed of seven catalytic beta subunits, are sandwiched by two outer rings, each composed of seven alpha subunits. The catalytic chamber with the active sites is on the inside of the barrel. Has a gated structure, the ends of the cylinder being occluded by the N-termini of the alpha-subunits. Is capped at one or both ends by the proteasome regulatory ATPase, PAN.

The protein localises to the cytoplasm. It carries out the reaction Cleavage of peptide bonds with very broad specificity.. Its activity is regulated as follows. The formation of the proteasomal ATPase PAN-20S proteasome complex, via the docking of the C-termini of PAN into the intersubunit pockets in the alpha-rings, triggers opening of the gate for substrate entry. Interconversion between the open-gate and close-gate conformations leads to a dynamic regulation of the 20S proteasome proteolysis activity. In terms of biological role, component of the proteasome core, a large protease complex with broad specificity involved in protein degradation. The polypeptide is Proteasome subunit beta 1 (Pyrobaculum neutrophilum (strain DSM 2338 / JCM 9278 / NBRC 100436 / V24Sta) (Thermoproteus neutrophilus)).